The following is a 129-amino-acid chain: Lysozyme C (129 aa).

The C-type lysozyme domain occupies Lys1 to Leu129. Disulfide bonds link Cys6-Cys127, Cys30-Cys115, Cys64-Cys80, and Cys76-Cys94. Active-site residues include Glu35 and Asp52.

It belongs to the glycosyl hydrolase 22 family. In terms of assembly, monomer.

It localises to the secreted. The catalysed reaction is Hydrolysis of (1-&gt;4)-beta-linkages between N-acetylmuramic acid and N-acetyl-D-glucosamine residues in a peptidoglycan and between N-acetyl-D-glucosamine residues in chitodextrins.. Functionally, lysozymes have primarily a bacteriolytic function; those in tissues and body fluids are associated with the monocyte-macrophage system and enhance the activity of immunoagents. This is Lysozyme C (LYZ) from Pavo cristatus (Indian peafowl).